Here is a 335-residue protein sequence, read N- to C-terminus: (+)-caryolan-1-ol synthase (335 aa).

Mg(2+) contacts are provided by aspartate 83, aspartate 87, asparagine 220, serine 224, and glutamate 228. Residues 83-87 (DDEFD) carry the DDXXD motif motif. The NSE/DTE motif motif lies at 220 to 228 (NDICSFEKE).

The protein belongs to the terpene synthase family. Mg(2+) is required as a cofactor. The cofactor is Mn(2+).

The catalysed reaction is (2E,6E)-farnesyl diphosphate = (+)-(E)-beta-caryophyllene + diphosphate. It carries out the reaction (+)-(E)-beta-caryophyllene + H2O = (+)-caryolan-1-ol. It functions in the pathway secondary metabolite biosynthesis; terpenoid biosynthesis. Its function is as follows. Sesquiterpene cyclase that first catalyzes the cyclization of farnesyl diphosphate (FPP) to the bicyclic sesquiterpene (+)-beta-caryophyllene intermediate, and then its conversion to (+)-caryolan-1-ol via a second cyclization and the addition of a water molecule. The sequence is that of (+)-caryolan-1-ol synthase (gcoA) from Streptomyces griseus subsp. griseus (strain JCM 4626 / CBS 651.72 / NBRC 13350 / KCC S-0626 / ISP 5235).